The following is a 21-amino-acid chain: Thanatin (21 aa).

An intrachain disulfide couples Cys-11 to Cys-18.

Its subcellular location is the secreted. In terms of biological role, insect defense peptide with a broad spectrum of activity against Gram-positive and Gram-negative bacteria and fungi. No activity against S.aureus. Stops respiration in bacteria but does not permeabilize their inner membranes. The polypeptide is Thanatin (Podisus maculiventris (Spined soldier bug)).